The following is a 571-amino-acid chain: Urease subunit alpha (571 aa).

The Urease domain occupies 133–571 (GGVDSHIHFI…LPLAQRYFLF (439 aa)). Ni(2+)-binding residues include His-138, His-140, and Lys-221. Lys-221 carries the N6-carboxylysine modification. His-223 serves as a coordination point for substrate. Ni(2+) contacts are provided by His-250 and His-276. The active-site Proton donor is His-324. Asp-364 contacts Ni(2+).

This sequence belongs to the metallo-dependent hydrolases superfamily. Urease alpha subunit family. As to quaternary structure, heterotrimer of UreA (gamma), UreB (beta) and UreC (alpha) subunits. Three heterotrimers associate to form the active enzyme. The cofactor is Ni cation. In terms of processing, carboxylation allows a single lysine to coordinate two nickel ions.

It localises to the cytoplasm. The catalysed reaction is urea + 2 H2O + H(+) = hydrogencarbonate + 2 NH4(+). It participates in nitrogen metabolism; urea degradation; CO(2) and NH(3) from urea (urease route): step 1/1. This chain is Urease subunit alpha, found in Anaeromyxobacter sp. (strain Fw109-5).